We begin with the raw amino-acid sequence, 318 residues long: Inactive dihydropteroate synthase 2 (318 aa).

The segment at 1–25 (MRSTPPASAGRSTPPALAGHSTPPA) is disordered. The Pterin-binding domain occupies 42–299 (ALIMAIVNRT…EVAATRRVLE (258 aa)).

This sequence belongs to the DHPS family. Homodimer.

In terms of biological role, has very low affinity for the DHPS substrate 6-hydroxymethyl-7,8-dihydropterin-pyrophosphate, but can bind the inhibitor dapsone. Seems to lack dihydropteroate synthase activity, and does probably not function in folate metabolism. In Mycobacterium bovis (strain ATCC BAA-935 / AF2122/97), this protein is Inactive dihydropteroate synthase 2 (folP2).